The primary structure comprises 372 residues: Solute carrier family 35 member F6 (372 aa).

Residues 1-18 (MAWTKYQLFLAGLMLVTG) form the signal peptide. The next 2 helical transmembrane spans lie at 48–68 (FVQAVGMFLGEFSCLAAFYLL) and 89–109 (LLFLPPALCDMTGTSIMYVAL). One can recognise an EamA domain in the interval 105 to 160 (MYVALNMTSASSFQMLRGAVIIFTGLFSVAFLDRRLVPSQWLGILITIAGLVVVGL). N-linked (GlcNAc...) asparagine glycosylation is present at Asn110. 7 helical membrane passes run 116-136 (SFQMLRGAVIIFTGLFSVAFL), 145-165 (WLGILITIAGLVVVGLADLLS), 176-196 (VITGDLLIIMAQIIIAIQMVL), 211-231 (AVGIEGFFGFVILSLLLVPMY), 261-281 (LIALALLGNISSIAFFNFSGI), 293-312 (MVLDTLRTVVIWAFTLALGW), and 320-336 (ILGFLILLMGTALYNGL). Thr366 bears the Phosphothreonine mark.

It belongs to the SLC35F solute transporter family. Interacts with SLC25A5.

It localises to the mitochondrion. The protein resides in the lysosome membrane. Functionally, involved in the maintenance of mitochondrial membrane potential in pancreatic ductal adenocarcinoma (PDAC) cells. Promotes pancreatic ductal adenocarcinoma (PDAC) cell growth. May play a role as a nucleotide-sugar transporter. The polypeptide is Solute carrier family 35 member F6 (Slc35f6) (Rattus norvegicus (Rat)).